The primary structure comprises 108 residues: Ig kappa chain V-V region EPC 109 (108 aa).

Positions 1-23 (DVQMIQSPSSLSASLGDIVTMTC) are framework-1. Cysteines 23 and 88 form a disulfide. Positions 24–34 (QASQGTNINLN) are complementarity-determining-1. The tract at residues 35–49 (WFQQKPGKAPKLLIY) is framework-2. The segment at 50 to 56 (GASILEA) is complementarity-determining-2. Positions 57–88 (GVPSRFSGRRYGTDFTLTISSLEDEDMATYFC) are framework-3. The complementarity-determining-3 stretch occupies residues 89 to 97 (LQHSYLPYT). Residues 98–108 (FGGGTKLEKKR) are framework-4.

This is Ig kappa chain V-V region EPC 109 from Mus musculus (Mouse).